The following is a 392-amino-acid chain: Metallophosphoesterase 1 (392 aa).

The helical transmembrane segment at 25 to 45 threads the bilayer; sequence KLAALVFAVVLFCEFLIYYLV. The a divalent metal cation site is built by Asp-73, Asp-115, Asn-153, His-246, His-300, and His-302. The chain crosses the membrane as a helical span at residues 352–372; the sequence is DTVLATYCVAAGLLVVLILVH.

The protein belongs to the metallophosphoesterase superfamily. MPPE1 family. As to quaternary structure, interacts with GPI-anchor proteins (via the GPI portion). Interacts with TMED10. Requires Mn(2+) as cofactor.

It localises to the endoplasmic reticulum-Golgi intermediate compartment membrane. In terms of biological role, metallophosphoesterase that catalyzes the removal of a side-chain ethanolamine-phosphate (EtNP) from the second mannose of the GPI-anchor protein intermediate. Participates in the glycan remodeling steps of GPI-anchor maturation to allow an efficient transport of GPI-anchor proteins from the endoplasmic reticulum to the Golgi. The chain is Metallophosphoesterase 1 from Ailuropoda melanoleuca (Giant panda).